The following is a 172-amino-acid chain: MHCPFCRHPDSRVVDSRTTDDGTSIRRRRQCPDCSRRFTTVETASLMVIKRSGVTEPFSRTKVISGVRKACQGRPVTEDALAQLGQRVEEAVRATGSAELTTHDVGLAILGPLQELDLVAYLRFASVYRAFDSLEDFEAAIAELREHRLPAERSGGGTCGTGTVPVPAGTAD.

A zinc finger lies at 3–34 (CPFCRHPDSRVVDSRTTDDGTSIRRRRQCPDC). One can recognise an ATP-cone domain in the interval 46-136 (LMVIKRSGVT…VYRAFDSLED (91 aa)). Residues 152-172 (ERSGGGTCGTGTVPVPAGTAD) form a disordered region. Over residues 161–172 (TGTVPVPAGTAD) the composition is skewed to low complexity.

It belongs to the NrdR family. Zn(2+) serves as cofactor.

Functionally, negatively regulates transcription of bacterial ribonucleotide reductase nrd genes and operons by binding to NrdR-boxes. In Streptomyces clavuligerus, this protein is Transcriptional repressor NrdR.